The following is a 320-amino-acid chain: MRSAQVYRWQIPMDAGVVLRDRRLKTRDGLYVCLRDGEREGWGEISPLPGFSQETWEEAQTALLTWVNDWLQGSEGLPEMPSVAFGASCALAELTGVLPEAADYRAAPLCTGDPDDLVLRLADMPGEKIAKVKVGLYEAVRDGMVVNLLLEAIPDLHLRLDANRAWTPLKAQQFAKYVNPDYRARIAFLEEPCKTRDDSRAFARETGIAIAWDESLREADFTFEAEEGVRAVVIKPTLTGSLDKVREQVAAAHALGLTAVISSSIESSLGLTQLARIAAWLTPGTLPGLDTLHLMQAQQVRPWPGSALPCLKRDELERLL.

K133 acts as the Proton donor in catalysis. 3 residues coordinate Mg(2+): D161, E190, and D213. The active-site Proton acceptor is K235.

It belongs to the mandelate racemase/muconate lactonizing enzyme family. MenC type 1 subfamily. A divalent metal cation serves as cofactor.

The catalysed reaction is (1R,6R)-6-hydroxy-2-succinyl-cyclohexa-2,4-diene-1-carboxylate = 2-succinylbenzoate + H2O. Its pathway is quinol/quinone metabolism; 1,4-dihydroxy-2-naphthoate biosynthesis; 1,4-dihydroxy-2-naphthoate from chorismate: step 4/7. It participates in quinol/quinone metabolism; menaquinone biosynthesis. Functionally, converts 2-succinyl-6-hydroxy-2,4-cyclohexadiene-1-carboxylate (SHCHC) to 2-succinylbenzoate (OSB). This chain is o-succinylbenzoate synthase, found in Salmonella enteritidis PT4 (strain P125109).